A 152-amino-acid polypeptide reads, in one-letter code: Non-specific lipid transfer protein GPI-anchored 8 (152 aa).

The first 23 residues, 1 to 23 (MNITRILGVVTTVVILYSVQVTA), serve as a signal peptide directing secretion. Cystine bridges form between C42-C56, C57-C98, and C70-C107. N108 carries an N-linked (GlcNAc...) asparagine glycan. The GPI-anchor amidated serine moiety is linked to residue S124. A propeptide spans 125–152 (GNSFSTKKNTALAITFFGFSFVFLGMII) (removed in mature form).

Belongs to the plant LTP family.

The protein resides in the cell membrane. Its function is as follows. Probable lipid transfer protein. The protein is Non-specific lipid transfer protein GPI-anchored 8 of Arabidopsis thaliana (Mouse-ear cress).